Reading from the N-terminus, the 212-residue chain is Imidazole glycerol phosphate synthase subunit HisH (212 aa).

The 211-residue stretch at 2 to 212 (KVAVIDYGMG…KNFLAWDGNV (211 aa)) folds into the Glutamine amidotransferase type-1 domain. The active-site Nucleophile is the C82. Residues H190 and E192 contribute to the active site.

Heterodimer of HisH and HisF.

The protein resides in the cytoplasm. It catalyses the reaction 5-[(5-phospho-1-deoxy-D-ribulos-1-ylimino)methylamino]-1-(5-phospho-beta-D-ribosyl)imidazole-4-carboxamide + L-glutamine = D-erythro-1-(imidazol-4-yl)glycerol 3-phosphate + 5-amino-1-(5-phospho-beta-D-ribosyl)imidazole-4-carboxamide + L-glutamate + H(+). The enzyme catalyses L-glutamine + H2O = L-glutamate + NH4(+). It participates in amino-acid biosynthesis; L-histidine biosynthesis; L-histidine from 5-phospho-alpha-D-ribose 1-diphosphate: step 5/9. In terms of biological role, IGPS catalyzes the conversion of PRFAR and glutamine to IGP, AICAR and glutamate. The HisH subunit catalyzes the hydrolysis of glutamine to glutamate and ammonia as part of the synthesis of IGP and AICAR. The resulting ammonia molecule is channeled to the active site of HisF. The polypeptide is Imidazole glycerol phosphate synthase subunit HisH (Chromobacterium violaceum (strain ATCC 12472 / DSM 30191 / JCM 1249 / CCUG 213 / NBRC 12614 / NCIMB 9131 / NCTC 9757 / MK)).